Consider the following 174-residue polypeptide: Peptide deformylase (174 aa).

2 residues coordinate Fe cation: Cys94 and His136. Glu137 is a catalytic residue. Residue His140 coordinates Fe cation.

This sequence belongs to the polypeptide deformylase family. The cofactor is Fe(2+).

The enzyme catalyses N-terminal N-formyl-L-methionyl-[peptide] + H2O = N-terminal L-methionyl-[peptide] + formate. Its function is as follows. Removes the formyl group from the N-terminal Met of newly synthesized proteins. Requires at least a dipeptide for an efficient rate of reaction. N-terminal L-methionine is a prerequisite for activity but the enzyme has broad specificity at other positions. In Rhizobium meliloti (strain 1021) (Ensifer meliloti), this protein is Peptide deformylase.